We begin with the raw amino-acid sequence, 59 residues long: UPF0434 protein VV1_2087 (59 aa).

The protein belongs to the UPF0434 family.

In Vibrio vulnificus (strain CMCP6), this protein is UPF0434 protein VV1_2087.